We begin with the raw amino-acid sequence, 380 residues long: Protein Wnt-5a (380 aa).

The signal sequence occupies residues 1-35 (MKKSIGILSPGVALGMAGSAMSSKFFLVALAIFFS). The propeptide occupies 36–61 (FAQVVIEANSWWSLGMNNPVQMSEVY). Residues cysteine 104 and cysteine 115 are joined by a disulfide bond. N-linked (GlcNAc...) asparagine glycosylation is found at asparagine 114 and asparagine 120. Disulfide bonds link cysteine 154-cysteine 162, cysteine 164-cysteine 182, cysteine 238-cysteine 252, cysteine 240-cysteine 247, cysteine 309-cysteine 340, cysteine 325-cysteine 335, cysteine 339-cysteine 379, cysteine 355-cysteine 370, cysteine 357-cysteine 367, and cysteine 362-cysteine 363. The O-palmitoleoyl serine; by PORCN moiety is linked to residue serine 244. Asparagine 312 and asparagine 326 each carry an N-linked (GlcNAc...) asparagine glycan.

This sequence belongs to the Wnt family. As to quaternary structure, forms a soluble 1:1 complex with AFM; this prevents oligomerization and is required for prolonged biological activity. The complex with AFM may represent the physiological form in body fluids. Homooligomer; disulfide-linked, leading to inactivation (in vitro). Interacts with PORCN. Interacts with WLS. Interacts with glypican GCP3. Interacts with PKD1 (via extracellular domain). Interacts with TMEM67. In terms of processing, glycosylation is necessary for secretion but not for activity. Palmitoleoylation is required for efficient binding to frizzled receptors. Depalmitoleoylation leads to Wnt signaling pathway inhibition. Post-translationally, proteolytic processing by TIKI1 and TIKI2 promotes oxidation and formation of large disulfide-bond oligomers, leading to inactivation of WNT5A. Expression is increased in differentiated thyroid carcinomas compared to normal thyroid tissue and anaplastic thyroid tumors where expression is low or undetectable. Expression is found in thyrocytes but not in stromal cells (at protein level). Detected in neonate heart and lung.

The protein localises to the secreted. Its subcellular location is the extracellular space. The protein resides in the extracellular matrix. Its function is as follows. Ligand for members of the frizzled family of seven transmembrane receptors. Can activate or inhibit canonical Wnt signaling, depending on receptor context. In the presence of FZD4, activates beta-catenin signaling. In the presence of ROR2, inhibits the canonical Wnt pathway by promoting beta-catenin degradation through a GSK3-independent pathway which involves down-regulation of beta-catenin-induced reporter gene expression. Suppression of the canonical pathway allows chondrogenesis to occur and inhibits tumor formation. Stimulates cell migration. Decreases proliferation, migration, invasiveness and clonogenicity of carcinoma cells and may act as a tumor suppressor. Mediates motility of melanoma cells. Required during embryogenesis for extension of the primary anterior-posterior axis and for outgrowth of limbs and the genital tubercle. Inhibits type II collagen expression in chondrocytes. The chain is Protein Wnt-5a (WNT5A) from Homo sapiens (Human).